A 271-amino-acid chain; its full sequence is Orotidine 5'-phosphate decarboxylase (271 aa).

The active-site Proton donor is Lys-95.

The protein belongs to the OMP decarboxylase family. Type 2 subfamily.

The catalysed reaction is orotidine 5'-phosphate + H(+) = UMP + CO2. It participates in pyrimidine metabolism; UMP biosynthesis via de novo pathway; UMP from orotate: step 2/2. This Aromatoleum aromaticum (strain DSM 19018 / LMG 30748 / EbN1) (Azoarcus sp. (strain EbN1)) protein is Orotidine 5'-phosphate decarboxylase.